The following is a 62-amino-acid chain: Frontoxin III (62 aa).

Cystine bridges form between Cys3–Cys24, Cys17–Cys41, Cys43–Cys54, and Cys55–Cys60.

Expressed by the venom gland.

It is found in the secreted. Functionally, binds to muscle nicotinic acetylcholine receptor (nAChR) and inhibit acetylcholine from binding to the receptor, thereby impairing neuromuscular transmission. The chain is Frontoxin III from Micrurus frontalis (Coral snake).